Here is a 480-residue protein sequence, read N- to C-terminus: Aspartyl/glutamyl-tRNA(Asn/Gln) amidotransferase subunit B (480 aa).

This sequence belongs to the GatB/GatE family. GatB subfamily. As to quaternary structure, heterotrimer of A, B and C subunits.

The catalysed reaction is L-glutamyl-tRNA(Gln) + L-glutamine + ATP + H2O = L-glutaminyl-tRNA(Gln) + L-glutamate + ADP + phosphate + H(+). The enzyme catalyses L-aspartyl-tRNA(Asn) + L-glutamine + ATP + H2O = L-asparaginyl-tRNA(Asn) + L-glutamate + ADP + phosphate + 2 H(+). Its function is as follows. Allows the formation of correctly charged Asn-tRNA(Asn) or Gln-tRNA(Gln) through the transamidation of misacylated Asp-tRNA(Asn) or Glu-tRNA(Gln) in organisms which lack either or both of asparaginyl-tRNA or glutaminyl-tRNA synthetases. The reaction takes place in the presence of glutamine and ATP through an activated phospho-Asp-tRNA(Asn) or phospho-Glu-tRNA(Gln). The polypeptide is Aspartyl/glutamyl-tRNA(Asn/Gln) amidotransferase subunit B (Streptococcus pneumoniae serotype 4 (strain ATCC BAA-334 / TIGR4)).